The primary structure comprises 499 residues: Myocyte-specific enhancer factor 2A (499 aa).

Positions R3–Y57 constitute an MADS-box domain. An N6-acetyllysine modification is found at K4. A DNA-binding region (mef2-type) is located at residues A58–E86. K117 bears the N6-acetyllysine mark. Positions T173 to L185 are enriched in low complexity. The tract at residues T173 to K269 is disordered. Polar residues predominate over residues T210–S233. 4 positions are modified to N6-acetyllysine: K248, K253, K269, and K281. The interval M265–G282 is required for interaction with MAPKs. The beta domain stretch occupies residues T288–L295. Residues V380–S392 show a composition bias toward low complexity. Residues V380–T499 are disordered. K402 carries the post-translational modification N6-acetyllysine; alternate. Residue K402 forms a Glycyl lysine isopeptide (Lys-Gly) (interchain with G-Cter in SUMO); alternate linkage. The segment covering Q421–P436 has biased composition (pro residues). Residues S445–D458 are compositionally biased toward low complexity. 2 stretches are compositionally biased toward basic and acidic residues: residues G459 to F469 and N480 to T499.

In terms of assembly, binds DNA as a homo- or heterodimer. Sumoylation on Lys-402 is enhanced by PIAS1 and represses transcriptional activity. Has no effect on nuclear location nor on DNA binding. Sumoylated by SUMO1 and, to a lesser extent by SUMO2 and SUMO3. In terms of processing, acetylation on Lys-402 activates transcriptional activity. As to expression, expressed in both embryonic and adult tissues with high expression in heart and skeletal muscle. Also expressed in gut, lung and brain of 15 dpc embryos and adults.

It localises to the nucleus. In terms of biological role, transcriptional activator which binds specifically to the MEF2 element, 5'-YTA[AT](4)TAR-3', found in numerous muscle-specific genes. Mediates cellular functions in skeletal and cardiac muscle development,. This chain is Myocyte-specific enhancer factor 2A (MEF2A), found in Gallus gallus (Chicken).